The primary structure comprises 334 residues: UstYa family oxidase aprY (334 aa).

The chain crosses the membrane as a helical span at residues 55–75 (IWILLTITNLIILGITVSMIV). Asparagine 112 carries an N-linked (GlcNAc...) asparagine glycan. Residues 185 to 189 (HQIHC) carry the HXXHC 1 motif. Asparagine 214 is a glycosylation site (N-linked (GlcNAc...) asparagine). Residues 223 to 227 (HLGHC) carry the HXXHC 2 motif. The span at 306 to 318 (SELGEKLGKHQKQ) shows a compositional bias: basic and acidic residues. Positions 306–334 (SELGEKLGKHQKQEGVLGQAGHQHTKRHE) are disordered.

Belongs to the ustYa family.

It is found in the membrane. It functions in the pathway secondary metabolite biosynthesis. UstYa family oxidase; part of the gene cluster that mediates the biosynthesis of the asperipin-2a, a bicyclic peptide that possesses two macrocyclic ether rings consisting of 14- and 17-membered paracyclophans. Within the pathway, aprY is responsible for the synthesis of the bicyclic structure of asperipin-2a. The pathway starts with the processing of the precursor aprA by kexin proteases to produce 11 identical copies of the hexapeptide Phe-Tyr-Tyr-Thr-Gly-Tyr. Macrocyclization of asperipin-2a may accompany an alpha-hydroxylation-dehydration sequence to give an imine, which is readily hydrolyzed to yield putative ketone intermediate. The reductase aprR may be required for the final reduction to yield asperipin-2a. The chain is UstYa family oxidase aprY from Aspergillus flavus (strain ATCC 200026 / FGSC A1120 / IAM 13836 / NRRL 3357 / JCM 12722 / SRRC 167).